The primary structure comprises 276 residues: Formamidopyrimidine-DNA glycosylase (276 aa).

Proline 2 (schiff-base intermediate with DNA) is an active-site residue. Glutamate 3 (proton donor) is an active-site residue. Lysine 58 (proton donor; for beta-elimination activity) is an active-site residue. The DNA site is built by histidine 92, arginine 111, and arginine 153. The FPG-type zinc-finger motif lies at 238-272 (TVYGRERQNCLNCSSTIIKTKHSGRSTFYCRTCQY). Catalysis depends on arginine 262, which acts as the Proton donor; for delta-elimination activity.

The protein belongs to the FPG family. Monomer. Zn(2+) is required as a cofactor.

It catalyses the reaction Hydrolysis of DNA containing ring-opened 7-methylguanine residues, releasing 2,6-diamino-4-hydroxy-5-(N-methyl)formamidopyrimidine.. The enzyme catalyses 2'-deoxyribonucleotide-(2'-deoxyribose 5'-phosphate)-2'-deoxyribonucleotide-DNA = a 3'-end 2'-deoxyribonucleotide-(2,3-dehydro-2,3-deoxyribose 5'-phosphate)-DNA + a 5'-end 5'-phospho-2'-deoxyribonucleoside-DNA + H(+). Involved in base excision repair of DNA damaged by oxidation or by mutagenic agents. Acts as a DNA glycosylase that recognizes and removes damaged bases. Has a preference for oxidized purines, such as 7,8-dihydro-8-oxoguanine (8-oxoG). Has AP (apurinic/apyrimidinic) lyase activity and introduces nicks in the DNA strand. Cleaves the DNA backbone by beta-delta elimination to generate a single-strand break at the site of the removed base with both 3'- and 5'-phosphates. This Rickettsia felis (strain ATCC VR-1525 / URRWXCal2) (Rickettsia azadi) protein is Formamidopyrimidine-DNA glycosylase.